A 499-amino-acid polypeptide reads, in one-letter code: Potassium voltage-gated channel subfamily A member 2 (499 aa).

The interval 1–26 (MTVATGDPVDEAAALPGHPQDTYDPE) is disordered. The interval 1 to 125 (MTVATGDPVD…YELGEEAMEM (125 aa)) is tetramerization domain. The Cytoplasmic portion of the chain corresponds to 1–160 (MTVATGDPVD…LLFEYPESSG (160 aa)). The helical transmembrane segment at 161-182 (PARIIAIVSVMVILISIVSFCL) threads the bilayer. Topologically, residues 183–221 (ETLPIFRDENEDMHGGGVTFHTYSNSTIGYQQSTSFTDP) are extracellular. A glycan (N-linked (GlcNAc...) asparagine) is linked at N207. Residues 222-243 (FFIVETLCIIWFSFEFLVRFFA) traverse the membrane as a helical segment. C244 is lipidated: S-palmitoyl cysteine. At 244-254 (CPSKAGFFTNI) the chain is on the cytoplasmic side. Residues 255 to 275 (MNIIDIVAIIPYFITLGTELA) traverse the membrane as a helical segment. The Extracellular portion of the chain corresponds to 276 to 289 (EKPEDAQQGQQAMS). The chain crosses the membrane as a helical; Voltage-sensor span at residues 290 to 310 (LAILRVIRLVRVFRIFKLSRH). At 311 to 325 (SKGLQILGQTLKASM) the chain is on the cytoplasmic side. Positions 312–325 (KGLQILGQTLKASM) are S4-S5 linker. The chain crosses the membrane as a helical span at residues 326–347 (RELGLLIFFLFIGVILFSSAVY). At 348 to 361 (FAEADERDSQFPSI) the chain is on the extracellular side. The segment at residues 362-373 (PDAFWWAVVSMT) is an intramembrane region (helical). A Selectivity filter motif is present at residues 374 to 379 (TVGYGD). An intramembrane segment occupies 374 to 381 (TVGYGDMV). Residues 382 to 388 (PTTIGGK) are Extracellular-facing. Residues 389–417 (IVGSLCAIAGVLTIALPVPVIVSNFNYFY) form a helical membrane-spanning segment. Residues 418–499 (HRETEGEEQA…VNITKMLTDV (82 aa)) lie on the Cytoplasmic side of the membrane. Y429 carries the post-translational modification Phosphotyrosine. S434, S440, S441, and S449 each carry phosphoserine. Y458 carries the phosphotyrosine modification. S468 bears the Phosphoserine mark. The short motif at 497-499 (TDV) is the PDZ-binding element.

This sequence belongs to the potassium channel family. A (Shaker) (TC 1.A.1.2) subfamily. Kv1.2/KCNA2 sub-subfamily. In terms of assembly, homotetramer and heterotetramer with other channel-forming alpha subunits, such as KCNA1, KCNA4, KCNA5, KCNA6 and KCNA7. Channel activity is regulated by interaction with beta subunits, including KCNAB1 and KCNAB2. Identified in a complex with KCNA1 and KCNAB2. Identified in a complex with KCNA5 and KCNAB1. Identified in a complex with KCNA4 and FYN. Interacts with PTK2B. Interacts (via C-terminus) with CTTN. Interacts with ADAM22. Interacts with CNTNAP2. Interacts (via C-terminus) with the PDZ domains of DLG1, DLG2 and DLG4. Interacts (via N-terminal cytoplasmic domain) with RHOA (GTP-bound form); this regulates channel activity by reducing location at the cell surface in response to CHRM1 activation. Interacts with DRD2. Interacts with SIGMAR1; cocaine consumption leads to increased interaction. Interacts with ADAM11. Interacts with LYNX1. In terms of processing, phosphorylated on tyrosine residues; phosphorylation increases in response to ischemia. Phosphorylated on tyrosine residues by activated PTK2B/PYK2. Phosphorylation on tyrosine residues suppresses ion channel activity. Phosphorylated on tyrosine residues in response to CHRM1 activation; this abolishes interaction with CTTN. This is probably due to endocytosis of the phosphorylated channel subunits. Phosphorylated on serine residues in response to increased cAMP levels; phosphorylation is apparently not catalyzed by PKA. Post-translationally, N-glycosylated, with complex, sialylated N-glycans. Detected in brain. Detected in cerebellum. Detected in mitral cells in the olfactory bulb. Detected in cochlea. Detected in cerebellum, particularly in the basket cell axon plexus and in the terminal regions around Purkinje cells (at protein level). Detected in juxtaparanodal regions in sciatic nerve. Detected in Schwann cells from sciatic nerve. Detected in dopamine neurons in substantia nigra. Detected in large myelinated fibers in juxtaparanodes in the CA3 and CA1 areas of the hippocampus. Detected in brain, in punctae on fiber tracts in brain stem and spinal cord, and on axons in the juxtaparanodal regions of the node of Ranvier (at protein level). Detected in dopamine neurons in the midbrain.

The protein localises to the cell membrane. It is found in the membrane. Its subcellular location is the cell projection. It localises to the axon. The protein resides in the synapse. The protein localises to the endoplasmic reticulum membrane. It is found in the lamellipodium membrane. Its subcellular location is the synaptosome. It localises to the presynaptic cell membrane. The protein resides in the dendrite. The protein localises to the perikaryon. It is found in the cell junction. Its subcellular location is the paranodal septate junction. The enzyme catalyses K(+)(in) = K(+)(out). With respect to regulation, inhibited by 4-aminopyridine (4-AP), dendrotoxin (DTX) and charybdotoxin (CTX), but not by tetraethylammonium (TEA). Inhibited by tityustoxin-K alpha (TsTX-Kalpha), a toxin that is highly specific for KCNA2. Inhibited by maurotoxin. Inhibited by kappaM conotoxins kappaM-RIIIJ and kappaM-RIIIK. Its function is as follows. Voltage-gated potassium channel that mediates transmembrane potassium transport in excitable membranes, primarily in the brain and the central nervous system, but also in the cardiovascular system. Prevents aberrant action potential firing and regulates neuronal output. Forms tetrameric potassium-selective channels through which potassium ions pass in accordance with their electrochemical gradient. The channel alternates between opened and closed conformations in response to the voltage difference across the membrane. Can form functional homotetrameric channels and heterotetrameric channels that contain variable proportions of KCNA1, KCNA2, KCNA4, KCNA5, KCNA6, KCNA7, and possibly other family members as well; channel properties depend on the type of alpha subunits that are part of the channel. Channel properties are modulated by cytoplasmic beta subunits that regulate the subcellular location of the alpha subunits and promote rapid inactivation of delayed rectifier potassium channels. In vivo, membranes probably contain a mixture of heteromeric potassium channel complexes, making it difficult to assign currents observed in intact tissues to any particular potassium channel family member. Homotetrameric KCNA2 forms a delayed-rectifier potassium channel that opens in response to membrane depolarization, followed by slow spontaneous channel closure. In contrast, a heteromultimer formed by KCNA2 and KCNA4 shows rapid inactivation. Contributes to the regulation of action potentials in neurons. KCNA2-containing channels play a presynaptic role and prevent hyperexcitability and aberrant action potential firing. Response to toxins that are selective for KCNA1, respectively for KCNA2, suggests that heteromeric potassium channels composed of both KCNA1 and KCNA2 play a role in pacemaking and regulate the output of deep cerebellar nuclear neurons. Response to toxins that are selective for KCNA2-containing potassium channels suggests that in Purkinje cells, dendritic subthreshold KCNA2-containing potassium channels prevent random spontaneous calcium spikes, suppressing dendritic hyperexcitability without hindering the generation of somatic action potentials, and thereby play an important role in motor coordination. KCNA2-containing channels play a role in GABAergic transmission from basket cells to Purkinje cells in the cerebellum, and thereby play an import role in motor coordination. Plays a role in the induction of long-term potentiation of neuron excitability in the CA3 layer of the hippocampus. May function as down-stream effector for G protein-coupled receptors and inhibit GABAergic inputs to basolateral amygdala neurons. May contribute to the regulation of neurotransmitter release, such as gamma-aminobutyric acid (GABA). Contributes to the regulation of the axonal release of the neurotransmitter dopamine. Reduced KCNA2 expression plays a role in the perception of neuropathic pain after peripheral nerve injury, but not acute pain. Plays a role in the regulation of the time spent in non-rapid eye movement (NREM) sleep. In Mus musculus (Mouse), this protein is Potassium voltage-gated channel subfamily A member 2 (Kcna2).